We begin with the raw amino-acid sequence, 273 residues long: NH(3)-dependent NAD(+) synthetase (273 aa).

47–54 (GISGGQDS) provides a ligand contact to ATP. Residue Asp-53 participates in Mg(2+) binding. Residue Arg-139 participates in deamido-NAD(+) binding. Residue Thr-159 coordinates ATP. Residue Glu-164 participates in Mg(2+) binding. Residues Lys-172 and Asp-179 each coordinate deamido-NAD(+). Residues Lys-188 and Thr-210 each contribute to the ATP site. 259–260 (HK) contributes to the deamido-NAD(+) binding site.

Belongs to the NAD synthetase family. Homodimer.

The enzyme catalyses deamido-NAD(+) + NH4(+) + ATP = AMP + diphosphate + NAD(+) + H(+). The protein operates within cofactor biosynthesis; NAD(+) biosynthesis; NAD(+) from deamido-NAD(+) (ammonia route): step 1/1. In terms of biological role, catalyzes the ATP-dependent amidation of deamido-NAD to form NAD. Uses ammonia as a nitrogen source. The sequence is that of NH(3)-dependent NAD(+) synthetase from Staphylococcus aureus (strain bovine RF122 / ET3-1).